Reading from the N-terminus, the 97-residue chain is Integration host factor subunit alpha (97 aa).

Belongs to the bacterial histone-like protein family. Heterodimer of an alpha and a beta chain.

In terms of biological role, this protein is one of the two subunits of integration host factor, a specific DNA-binding protein that functions in genetic recombination as well as in transcriptional and translational control. The polypeptide is Integration host factor subunit alpha (Colwellia psychrerythraea (strain 34H / ATCC BAA-681) (Vibrio psychroerythus)).